Reading from the N-terminus, the 167-residue chain is Ribosome maturation factor RimM (167 aa).

Residues E92 to M165 form the PRC barrel domain.

This sequence belongs to the RimM family. Binds ribosomal protein uS19.

The protein resides in the cytoplasm. Its function is as follows. An accessory protein needed during the final step in the assembly of 30S ribosomal subunit, possibly for assembly of the head region. Essential for efficient processing of 16S rRNA. May be needed both before and after RbfA during the maturation of 16S rRNA. It has affinity for free ribosomal 30S subunits but not for 70S ribosomes. This Alkaliphilus oremlandii (strain OhILAs) (Clostridium oremlandii (strain OhILAs)) protein is Ribosome maturation factor RimM.